The following is a 129-amino-acid chain: Small ribosomal subunit protein uS11 (129 aa).

It belongs to the universal ribosomal protein uS11 family. In terms of assembly, part of the 30S ribosomal subunit. Interacts with proteins S7 and S18. Binds to IF-3.

Functionally, located on the platform of the 30S subunit, it bridges several disparate RNA helices of the 16S rRNA. Forms part of the Shine-Dalgarno cleft in the 70S ribosome. The sequence is that of Small ribosomal subunit protein uS11 from Parabacteroides distasonis (strain ATCC 8503 / DSM 20701 / CIP 104284 / JCM 5825 / NCTC 11152).